Here is a 638-residue protein sequence, read N- to C-terminus: Factor of DNA methylation 3 (638 aa).

Positions 318–497 (FNRIFADHEK…RALISNLRDM (180 aa)) form a coiled coil.

Functionally, acts in association with FDM4 and FDM5 for RNA-directed DNA methylation (RdDM). The chain is Factor of DNA methylation 3 from Arabidopsis thaliana (Mouse-ear cress).